The following is a 106-amino-acid chain: UPF0145 protein Pput_2816 (106 aa).

This sequence belongs to the UPF0145 family.

The sequence is that of UPF0145 protein Pput_2816 from Pseudomonas putida (strain ATCC 700007 / DSM 6899 / JCM 31910 / BCRC 17059 / LMG 24140 / F1).